Consider the following 120-residue polypeptide: MQVKANDTTTARGREAEDRAARHLERGGLRVVERNFRIRGGEIDLICRDGKGLVFVEVRQRSRSDFGGAGASITAGKRRRIVLAAQHYLLGKPDCDCRFDCVLIDGEQLEWIKHAFSADD.

Residues 1 to 20 (MQVKANDTTTARGREAEDRA) are disordered.

The protein belongs to the UPF0102 family.

The protein is UPF0102 protein Daro_0503 of Dechloromonas aromatica (strain RCB).